The following is a 260-amino-acid chain: MSHHWGYGEHNGPEHWHKDFPIADGERQSPVDIDTKAVVPDPALKPLALLYEQAASRRMVNNGHSFNVEFDDSQDKAVLKDGPLTGTYRLVQFHFHWGSSDDQGSEHTVDRKKYAAELHLVHWNTKYGDFGTAAQQPDGLAVVGVFLKVGDANPALQKVLDVLDSIKTKGKSADFPNFDPSSLLKRALNYWTYPGSLTNPPLLESVTWVVLKEPTSVSSQQMLKFRSLNFNAEGEPELLMLANWRPAQPLKNRQVRVFPK.

N-acetylserine is present on Ser2. Ser2 bears the Phosphoserine mark. The Alpha-carbonic anhydrase domain occupies 3–259; sequence HHWGYGEHNG…LKNRQVRVFP (257 aa). Residue His64 is the Proton donor/acceptor of the active site. Zn(2+)-binding residues include His94, His96, and His119. Residues Ser165 and Ser172 each carry the phosphoserine modification. 198 to 199 is a substrate binding site; that stretch reads TN.

This sequence belongs to the alpha-carbonic anhydrase family. As to quaternary structure, interacts with SLC4A4 and SLC26A6. Interaction with SLC4A7 regulates SLC4A7 transporter activity. Zn(2+) is required as a cofactor.

It localises to the cytoplasm. It is found in the cell membrane. It carries out the reaction hydrogencarbonate + H(+) = CO2 + H2O. It catalyses the reaction urea = cyanamide + H2O. Its activity is regulated as follows. Inhibited by acetazolamide. Functionally, catalyzes the reversible hydration of carbon dioxide. Can also hydrate cyanamide to urea. Involved in the regulation of fluid secretion into the anterior chamber of the eye. Essential for bone resorption and osteoclast differentiation. Contributes to intracellular pH regulation in the duodenal upper villous epithelium during proton-coupled peptide absorption. Stimulates the chloride-bicarbonate exchange activity of SLC26A6. The protein is Carbonic anhydrase 2 (CA2) of Ovis aries (Sheep).